Consider the following 403-residue polypeptide: MRLSRLLIGASLGVALSSTVFTAALADVKFGSLYPISGSLALLGEESARGLELAVDEVNAAGGIKGEKVVLERGDAVDNNQATGEARRLISLVGVKAIFGTYSSARVIAASQVSELAGIPYFEMGAVADEVTGRGLQYLFRTNPTAENMAKDSVDMLIKGIAPGLGKDPKDMKIGIIYEDSSYGTSVAGHQEDNAKAAGLTVVLKSGYPSNTVDMSSLVLELREKGADVVMQTSYQNDSVLFLQQANEAGYKPLAIIGGGGGYSMQPTADAVGHDLIDGVFDADYTQYAVNTSATPGLTEFVEAYKAKYGSQPRSGHSLTNYVGAKAIFQALNAGEGFEPDQIVSAVKALDIPDGQTAAGYGVKFGKNNQNERATMMGMQWQDGKLVTVYPENAAIAKMRFKK.

The N-terminal stretch at 1-26 (MRLSRLLIGASLGVALSSTVFTAALA) is a signal peptide.

This sequence belongs to the leucine-binding protein family.

Its function is as follows. Component of an amino-acid transport system. The polypeptide is Leu/Ile/Val-binding protein homolog 8 (Brucella abortus (strain 2308)).